Consider the following 200-residue polypeptide: Large ribosomal subunit protein uL4 (200 aa).

Positions Thr-42–Gly-65 are disordered.

It belongs to the universal ribosomal protein uL4 family. As to quaternary structure, part of the 50S ribosomal subunit.

In terms of biological role, one of the primary rRNA binding proteins, this protein initially binds near the 5'-end of the 23S rRNA. It is important during the early stages of 50S assembly. It makes multiple contacts with different domains of the 23S rRNA in the assembled 50S subunit and ribosome. Forms part of the polypeptide exit tunnel. The polypeptide is Large ribosomal subunit protein uL4 (Vibrio vulnificus (strain CMCP6)).